Here is a 270-residue protein sequence, read N- to C-terminus: Diaminopimelate epimerase (270 aa).

Substrate contacts are provided by Asn15, Gln49, and Asn66. Cys75 serves as the catalytic Proton donor. Substrate contacts are provided by residues Gly76 to Asn77, Asn155, Asn187, and Glu204 to Arg205. The Proton acceptor role is filled by Cys213. Residue Gly214–Ser215 coordinates substrate.

Belongs to the diaminopimelate epimerase family. As to quaternary structure, homodimer.

Its subcellular location is the cytoplasm. The enzyme catalyses (2S,6S)-2,6-diaminopimelate = meso-2,6-diaminopimelate. It functions in the pathway amino-acid biosynthesis; L-lysine biosynthesis via DAP pathway; DL-2,6-diaminopimelate from LL-2,6-diaminopimelate: step 1/1. Its function is as follows. Catalyzes the stereoinversion of LL-2,6-diaminopimelate (L,L-DAP) to meso-diaminopimelate (meso-DAP), a precursor of L-lysine and an essential component of the bacterial peptidoglycan. This is Diaminopimelate epimerase from Rickettsia akari (strain Hartford).